We begin with the raw amino-acid sequence, 151 residues long: Receptor activity-modifying protein 3 (151 aa).

A signal peptide spans 1 to 30; sequence MEATAPRRRHLLPLLLLLLLLCGECPPVSG. Over 31 to 116 the chain is Extracellular; that stretch reads CNEKRMLAML…CSVDRQQWQD (86 aa). Intrachain disulfides connect C43/C75 and C60/C107. Residues N61 and N106 are each glycosylated (N-linked (GlcNAc...) asparagine). The helical transmembrane segment at 117 to 141 threads the bilayer; the sequence is PPDEILIPLIVVPILLTLAMTGLVV. Over 142 to 151 the chain is Cytoplasmic; the sequence is WRSKRAAQVV.

This sequence belongs to the RAMP family. As to quaternary structure, heterodimer of CALCRL and RAMP3; interaction induces allosteric modulation of CALCRL function and ligand specificity for adrenomedullin/ADM and intermedin/ADM2. Heterodimer of CALCR and RAMP3; interaction form the receptor complex AMYR3 for amylin/IAPP. Interacts with GPER1.

It localises to the cell membrane. Its subcellular location is the membrane. Functionally, accessory protein that interacts with and modulates the function of G-protein coupled receptors including calcitonin gene-related peptide type 1 receptor (CALCRL), calcitonin receptor (CALCR) and G-protein coupled estrogen receptor 1 (GPER1). Required for the transport of CALCRL and GPER1 receptors to the plasma membrane. Plays a role in cardioprotection by reducing cardiac hypertrophy and perivascular fibrosis in a GPER1-dependent manner. Together with CALCRL, form a receptor complex for adrenomedullin/ADM and intermedin/ADM2. Together with CALCR, act as a receptor complex for amylin/IAPP. In Sus scrofa (Pig), this protein is Receptor activity-modifying protein 3 (RAMP3).